A 62-amino-acid chain; its full sequence is Large ribosomal subunit protein eL24 (62 aa).

Positions 7, 10, 33, and 37 each coordinate Zn(2+). Residues 7 to 37 form a C4-type zinc finger; that stretch reads CDYCGDDIEPGTGTMFVHNDGSTVHFCSAKC.

Belongs to the eukaryotic ribosomal protein eL24 family. As to quaternary structure, part of the 50S ribosomal subunit. Forms a cluster with proteins L3 and L14. Zn(2+) is required as a cofactor.

Functionally, binds to the 23S rRNA. The chain is Large ribosomal subunit protein eL24 from Halobacterium salinarum (strain ATCC 29341 / DSM 671 / R1).